The chain runs to 268 residues: Type III pantothenate kinase 1 (268 aa).

6 to 13 (DIGNTNIT) provides a ligand contact to ATP. Substrate is bound by residues Tyr100 and 107-110 (GTDR). Asp109 acts as the Proton acceptor in catalysis. Asp133 serves as a coordination point for K(+). Thr136 serves as a coordination point for ATP.

The protein belongs to the type III pantothenate kinase family. Homodimer. NH4(+) is required as a cofactor. Requires K(+) as cofactor.

The protein resides in the cytoplasm. It catalyses the reaction (R)-pantothenate + ATP = (R)-4'-phosphopantothenate + ADP + H(+). It functions in the pathway cofactor biosynthesis; coenzyme A biosynthesis; CoA from (R)-pantothenate: step 1/5. Functionally, catalyzes the phosphorylation of pantothenate (Pan), the first step in CoA biosynthesis. This chain is Type III pantothenate kinase 1, found in Symbiobacterium thermophilum (strain DSM 24528 / JCM 14929 / IAM 14863 / T).